We begin with the raw amino-acid sequence, 1873 residues long: Kinesin-related protein 8 (1873 aa).

One can recognise a Kinesin motor domain in the interval 13 to 413 (CVRVALRVRP…LKYAYRARNI (401 aa)). Residue 93–100 (GQTGSGKT) coordinates ATP. Disordered regions lie at residues 231-302 (NSPV…DERN), 463-567 (VSIP…SPTS), 778-797 (LDKD…YYED), 841-891 (KIDS…ARKT), 930-1008 (KQRV…TEQL), 1179-1207 (PQPL…QRSS), 1244-1267 (LPSQ…STSS), 1328-1360 (TTTT…NNSS), and 1403-1467 (NNIT…PRPD). Residues 232 to 247 (SPVTSSSTSSTSTSSS) show a composition bias toward low complexity. Acidic residues predominate over residues 280–297 (IDEDEEDDEEDEDDDIMS). Residues 473 to 567 (TPTLTNNNNN…NNTATPSPTS (95 aa)) are compositionally biased toward low complexity. The stretch at 715–933 (FENDSEELSD…KEIEVHKQRV (219 aa)) forms a coiled coil. 5 stretches are compositionally biased toward low complexity: residues 937–1005 (INSK…TPTT), 1182–1200 (LQSQ…NSEQ), 1244–1254 (LPSQQQLSSSQ), 1348–1358 (NNTNNNNNNNN), and 1423–1454 (SLQS…SNNN). 5 WD repeats span residues 1506 to 1546 (GHDG…NMLD), 1548 to 1587 (SSPG…NTNL), 1589 to 1628 (IFKT…KPLK), 1636 to 1673 (HHTG…LAQK), and 1677 to 1714 (PHHD…NLIN). The disordered stretch occupies residues 1758–1780 (NNNNNNSSNNNKSSSAPSSTTSS). WD repeat units follow at residues 1805–1842 (AHND…NSLL) and 1844–1873 (GHES…IWKC).

Belongs to the TRAFAC class myosin-kinesin ATPase superfamily. Kinesin family.

The protein resides in the cytoplasm. The protein localises to the cytoskeleton. Microtubule-associated force-producing protein that plays a role in organelle transport. Its motor activity is directed toward the microtubule's plus end. Cooperates with kif10 and dynein to organize interphase microtubules. The protein is Kinesin-related protein 8 (kif8) of Dictyostelium discoideum (Social amoeba).